The sequence spans 640 residues: Dextranase (640 aa).

An N-terminal signal peptide occupies residues 1-32 (MPGTGLGRLAKRMTAAAAVFFISTSAVLPAQA). A propeptide spanning residues 33–49 (ATAPAAAPPGVPAALKA) is cleaved from the precursor. Positions 248 to 269 (EQKERLVPTEESGSIHYPEPGE) are disordered.

It belongs to the glycosyl hydrolase 49 family.

The protein localises to the secreted. The catalysed reaction is Endohydrolysis of (1-&gt;6)-alpha-D-glucosidic linkages in dextran.. Functionally, efficiently decomposes water-insoluble glucan as well as dextran. The sequence is that of Dextranase from Arthrobacter sp. (strain CB-8).